The primary structure comprises 308 residues: MARTDNDTWDLASSVGATATMVAAARAVATRAPDAVIDDPFAEPLVRAVGVDFFTRLATGDLTPTDLDPDATGGAGNMDRFADGMAARTRFFDDFFSDAADAGVRQAVILASGLDSRAYRLPWPAGTVVFEIDQPGVITFKSDTLARLGAKPTADHRTVPVDLRDDWIGALEAAGFDRTEPSAWIAEGLFGYLPPEAQDRLLDQITELSPPGSRLAVEGVVSSPDADDEQIRERMQAVRDQWRQFGFDLDFSELVYTGERAEVAAYLGERGWRTDSITATALLEKCGLQSAEDSSANFADVRYVTAVK.

S-adenosyl-L-methionine-binding positions include Asp-133 and 162 to 163; that span reads DL.

It belongs to the UPF0677 family.

Exhibits S-adenosyl-L-methionine-dependent methyltransferase activity. The protein is Putative S-adenosyl-L-methionine-dependent methyltransferase Mjls_1073 of Mycobacterium sp. (strain JLS).